The primary structure comprises 288 residues: Elongation factor Ts (288 aa).

An involved in Mg(2+) ion dislocation from EF-Tu region spans residues 82 to 85; the sequence is TDFV.

Belongs to the EF-Ts family.

It is found in the cytoplasm. Associates with the EF-Tu.GDP complex and induces the exchange of GDP to GTP. It remains bound to the aminoacyl-tRNA.EF-Tu.GTP complex up to the GTP hydrolysis stage on the ribosome. The polypeptide is Elongation factor Ts (Chlorobaculum parvum (strain DSM 263 / NCIMB 8327) (Chlorobium vibrioforme subsp. thiosulfatophilum)).